The sequence spans 657 residues: Threonine--tRNA ligase (657 aa).

The TGS domain occupies 7 to 70 (ILAVIALTLP…TADAAIEIIT (64 aa)). The catalytic stretch occupies residues 253-555 (DHRKLGAELE…LIEHTAGNFP (303 aa)). Residues cysteine 351, histidine 402, and histidine 532 each coordinate Zn(2+).

This sequence belongs to the class-II aminoacyl-tRNA synthetase family. In terms of assembly, homodimer. Zn(2+) is required as a cofactor.

Its subcellular location is the cytoplasm. It catalyses the reaction tRNA(Thr) + L-threonine + ATP = L-threonyl-tRNA(Thr) + AMP + diphosphate + H(+). Its function is as follows. Catalyzes the attachment of threonine to tRNA(Thr) in a two-step reaction: L-threonine is first activated by ATP to form Thr-AMP and then transferred to the acceptor end of tRNA(Thr). Also edits incorrectly charged L-seryl-tRNA(Thr). The sequence is that of Threonine--tRNA ligase from Pelodictyon phaeoclathratiforme (strain DSM 5477 / BU-1).